A 478-amino-acid polypeptide reads, in one-letter code: GTPase Obg (478 aa).

In terms of domain architecture, Obg spans 2-159 (TTFVDRVELH…RDIVLELKTV (158 aa)). The disordered stretch occupies residues 61–87 (HHSPHRKATNGQPGAGDNRSGKDGQDL). Residues 160–330 (ADVALVGYPS…LSFALAGIIA (171 aa)) form the OBG-type G domain. GTP is bound by residues 166–173 (GYPSAGKS), 191–195 (FTTLV), 212–215 (DVPG), 282–285 (NKVD), and 311–313 (SAI). Mg(2+) contacts are provided by S173 and T193. Residues 348–430 (PRAVDDAGFT…ENAVVFDWEP (83 aa)) enclose the OCT domain. A disordered region spans residues 436–478 (AEMLGRRGEDHRLEEPRPAAQRRRERDAERDDAEKEYDEFDPF). Over residues 439–468 (LGRRGEDHRLEEPRPAAQRRRERDAERDDA) the composition is skewed to basic and acidic residues. Residues 469–478 (EKEYDEFDPF) are compositionally biased toward acidic residues.

The protein belongs to the TRAFAC class OBG-HflX-like GTPase superfamily. OBG GTPase family. Monomer. Mg(2+) serves as cofactor.

It localises to the cytoplasm. Functionally, an essential GTPase which binds GTP, GDP and possibly (p)ppGpp with moderate affinity, with high nucleotide exchange rates and a fairly low GTP hydrolysis rate. Plays a role in control of the cell cycle, stress response, ribosome biogenesis and in those bacteria that undergo differentiation, in morphogenesis control. In Streptomyces griseus subsp. griseus (strain JCM 4626 / CBS 651.72 / NBRC 13350 / KCC S-0626 / ISP 5235), this protein is GTPase Obg.